The primary structure comprises 215 residues: Unique short US11 glycoprotein (215 aa).

The segment at residues 1 to 17 is a signal peptide (partially cleaved); it reads MNLVMLILALWAPVAGS. Residues 18–182 are Lumenal-facing; sequence MPELSLTLFD…YYALTIKSAQ (165 aa). The Ig-like H-type domain maps to 47–146; sequence YRVEYSEARC…TYYVECEPRC (100 aa). Cys56 and Cys142 form a disulfide bridge. N-linked (GlcNAc...) asparagine; by host glycosylation occurs at Asn73. Residues 183-203 traverse the membrane as a helical segment; it reads YTLMMVAVIQVFWGLYVKGWL. The Cytoplasmic segment spans residues 204-215; sequence HRHFPWMFSDQW.

It belongs to the cytomegalovirus US6 family. As to quaternary structure, interacts with host TRAM1. N-glycosylated. Post-translationally, a fraction of newly synthesized molecules retain the signal peptide after the N-linked glycan has been attached and translation of the polypeptide has been completed. Delayed cleavage of the signal peptide is determined by the first four residues, as well as by the transmembrane region.

It is found in the host endoplasmic reticulum membrane. Participates in the inhibition of the host immune response. Redirects newly synthesized major histocompatibility complex (MHC) class I heavy chains via the SEC61 translocon to the cytosol where they undergo proteasome-dependent destruction. In consequence, infected cells are masked for immune recognition by cytotoxic T-lymphocytes. This Human cytomegalovirus (strain AD169) (HHV-5) protein is Unique short US11 glycoprotein (US11).